Here is a 512-residue protein sequence, read N- to C-terminus: Probable cytochrome P450 6d2 (512 aa).

A heme-binding site is contributed by Cys-457.

Belongs to the cytochrome P450 family. Heme serves as cofactor.

It localises to the endoplasmic reticulum membrane. Its subcellular location is the microsome membrane. Its function is as follows. May be involved in the metabolism of insect hormones and in the breakdown of synthetic insecticides. The protein is Probable cytochrome P450 6d2 (Cyp6d2) of Drosophila melanogaster (Fruit fly).